Reading from the N-terminus, the 298-residue chain is Inosose dehydratase (298 aa).

This sequence belongs to the IolE/MocC family. Glutathione is required as a cofactor. Co(2+) serves as cofactor. It depends on Mn(2+) as a cofactor.

The catalysed reaction is scyllo-inosose = 3D-3,5/4-trihydroxycyclohexane-1,2-dione + H2O. Its pathway is polyol metabolism; myo-inositol degradation into acetyl-CoA; acetyl-CoA from myo-inositol: step 2/7. Catalyzes the dehydration of inosose (2-keto-myo-inositol, 2KMI or 2,4,6/3,5-pentahydroxycyclohexanone) to 3D-(3,5/4)-trihydroxycyclohexane-1,2-dione (D-2,3-diketo-4-deoxy-epi-inositol). This chain is Inosose dehydratase, found in Geobacillus thermodenitrificans (strain NG80-2).